The following is a 409-amino-acid chain: Dual-specificity RNA methyltransferase RlmN (409 aa).

Glutamate 121 (proton acceptor) is an active-site residue. A Radical SAM core domain is found at 127–376 (EEGRGTLCIS…IRTPRGRDIL (250 aa)). A disulfide bond links cysteine 134 and cysteine 379. [4Fe-4S] cluster is bound by residues cysteine 141, cysteine 145, and cysteine 148. S-adenosyl-L-methionine-binding positions include 205–206 (GE), serine 237, 259–261 (SLH), and asparagine 336. Catalysis depends on cysteine 379, which acts as the S-methylcysteine intermediate.

Belongs to the radical SAM superfamily. RlmN family. Requires [4Fe-4S] cluster as cofactor.

It is found in the cytoplasm. The enzyme catalyses adenosine(2503) in 23S rRNA + 2 reduced [2Fe-2S]-[ferredoxin] + 2 S-adenosyl-L-methionine = 2-methyladenosine(2503) in 23S rRNA + 5'-deoxyadenosine + L-methionine + 2 oxidized [2Fe-2S]-[ferredoxin] + S-adenosyl-L-homocysteine. It catalyses the reaction adenosine(37) in tRNA + 2 reduced [2Fe-2S]-[ferredoxin] + 2 S-adenosyl-L-methionine = 2-methyladenosine(37) in tRNA + 5'-deoxyadenosine + L-methionine + 2 oxidized [2Fe-2S]-[ferredoxin] + S-adenosyl-L-homocysteine. Specifically methylates position 2 of adenine 2503 in 23S rRNA and position 2 of adenine 37 in tRNAs. m2A2503 modification seems to play a crucial role in the proofreading step occurring at the peptidyl transferase center and thus would serve to optimize ribosomal fidelity. This is Dual-specificity RNA methyltransferase RlmN from Agrobacterium fabrum (strain C58 / ATCC 33970) (Agrobacterium tumefaciens (strain C58)).